The primary structure comprises 301 residues: MTVQRILIVSGTHGNEINPVWAVKQFNREENSLKHGIEYEYIIGNPVAYEKGCRYIDVDLNRSFKESENCDQQKNSFYETNRANFLLDEFGIDGSKPCQIVIDLHTTTANMGTSIVLYGRRFKDFCLAALLQNKFGLPIYLHEKDKAQTGFLVEAWPCGLVIEIGAVAQNFYDPKIIDRFSLIISSLREEIDKLKNNLIELPKELVVYVHQGSIDYPRDKKGVIDGLIHPERINQDWKMIKKGDPLFLDSQGIVHKYDGDQLIWPVFIGEVAYKEKNIAMSYTKKEVICSKKQWVQDFESL.

Positions 13 and 16 each coordinate Zn(2+). Residues R54 and 61–62 each bind substrate; that span reads NR. Zn(2+) is bound at residue H105. Substrate is bound by residues E163 and Y273.

This sequence belongs to the AspA/AstE family. Aspartoacylase subfamily. Requires Zn(2+) as cofactor.

It catalyses the reaction an N-acyl-L-aspartate + H2O = a carboxylate + L-aspartate. This chain is Probable aspartoacylase, found in Prochlorococcus marinus (strain AS9601).